A 497-amino-acid polypeptide reads, in one-letter code: COP9 signalosome complex subunit 3 (497 aa).

The PCI domain maps to 233–408 (QAFDAFERCV…DGSPAYLTFL (176 aa)).

It belongs to the CSN3 family. In terms of assembly, component of the COP9 signalosome (CSN) complex.

The protein resides in the cytoplasm. It is found in the nucleus. Its function is as follows. Component of the COP9 signalosome (CSN) complex that acts as an regulator of the ubiquitin (Ubl) conjugation pathway by mediating the deneddylation of the cullin subunit of SCF-type E3 ubiquitin-protein ligase complexes. The CSN complex is involved in the regulation of the circadian clock through its control of the stability of the SCF(FWD1) complex. This Neurospora crassa (strain ATCC 24698 / 74-OR23-1A / CBS 708.71 / DSM 1257 / FGSC 987) protein is COP9 signalosome complex subunit 3 (csn-3).